Reading from the N-terminus, the 258-residue chain is Ferredoxin--NADP reductase (258 aa).

Residues 2–102 enclose the FAD-binding FR-type domain; that stretch reads SNLYTERVLS…RKPTGTLVHD (101 aa). FAD contacts are provided by R51, A52, Y53, S54, F67, I69, L76, T77, and T117. The NADP(+) site is built by V144, R145, T181, R182, R190, S223, E227, F255, and E257. Positions 255, 257, and 258 each coordinate FAD.

The protein belongs to the ferredoxin--NADP reductase type 1 family. Monomer. FAD serves as cofactor.

It catalyses the reaction 2 reduced [2Fe-2S]-[ferredoxin] + NADP(+) + H(+) = 2 oxidized [2Fe-2S]-[ferredoxin] + NADPH. Its function is as follows. Transports electrons between ferredoxin and NADPH. Provides electrons to heme oxygenase (pigA) allowing anaerobic heme degradation. Provides electrons necessary to reduce and mobilize Fe(3+) in a heterooligomeric bacterioferritin (BFR) complex to Fe(2+). Reduction of Fe(3+) in a pure FtnA BFR does not require Bfd. Reduction of Fe(3+) in a pure BfrB BFR does require Bfd. The sequence is that of Ferredoxin--NADP reductase from Pseudomonas aeruginosa (strain ATCC 15692 / DSM 22644 / CIP 104116 / JCM 14847 / LMG 12228 / 1C / PRS 101 / PAO1).